The following is a 465-amino-acid chain: Plasma alpha-L-fucosidase (465 aa).

Positions 1–26 (MRPQELPRLAFPLLLLLLLPPPPCPA) are cleaved as a signal peptide. N-linked (GlcNAc...) asparagine glycans are attached at residues Asn169 and Asn237. Ser299 bears the Phosphoserine mark. A glycan (N-linked (GlcNAc...) asparagine) is linked at Asn375.

The protein belongs to the glycosyl hydrolase 29 family. In terms of assembly, homotetramer.

The protein localises to the secreted. It carries out the reaction an alpha-L-fucoside + H2O = L-fucose + an alcohol. Functionally, alpha-L-fucosidase is responsible for hydrolyzing the alpha-1,6-linked fucose joined to the reducing-end N-acetylglucosamine of the carbohydrate moieties of glycoproteins. The protein is Plasma alpha-L-fucosidase (FUCA2) of Pongo abelii (Sumatran orangutan).